The following is a 233-amino-acid chain: Protein YIPF6 (233 aa).

At 1 to 84 the chain is on the cytoplasmic side; sequence MAETEGFGDS…PKKSTTLLRD (84 aa). Residues 85-105 traverse the membrane as a helical segment; it reads WDLWGPLVLCVSLALMLQGGN. The Lumenal segment spans residues 106 to 111; that stretch reads ADSKDD. The helical transmembrane segment at 112-132 threads the bilayer; that stretch reads GGPQFAEVFVIIWFGAVVITL. The Cytoplasmic segment spans residues 133–142; it reads NSKLLGGTIS. Residues 143–163 traverse the membrane as a helical segment; that stretch reads FFQSLCVLGYCILPLTVAMLV. The Lumenal portion of the chain corresponds to 164-180; that stretch reads CRLVLLLSHTTASFIVR. Residues 181–201 traverse the membrane as a helical segment; it reads LVVVTVMFAWSTFASTAFLAD. Residues 202-208 are Cytoplasmic-facing; that stretch reads SQPPNRR. The helical transmembrane segment at 209 to 229 threads the bilayer; the sequence is ALAVYPIFLFYFVISWMVLTF. The Lumenal portion of the chain corresponds to 230–233; it reads NTVS.

This sequence belongs to the YIP1 family.

It is found in the golgi apparatus membrane. This Xenopus tropicalis (Western clawed frog) protein is Protein YIPF6 (yipf6).